Consider the following 339-residue polypeptide: Dihydroorotate dehydrogenase (quinone) (339 aa).

FMN contacts are provided by residues 64–68 and T88; that span reads AGADK. K68 is a binding site for substrate. Substrate is bound at residue 113 to 117; that stretch reads NRNGF. N141 and N174 together coordinate FMN. N174 is a binding site for substrate. S177 acts as the Nucleophile in catalysis. N179 contacts substrate. The FMN site is built by K219 and T247. A substrate-binding site is contributed by 248-249; sequence NT. Residues G270, G299, and 320-321 each bind FMN; that span reads YS.

Belongs to the dihydroorotate dehydrogenase family. Type 2 subfamily. As to quaternary structure, monomer. FMN serves as cofactor.

It localises to the cell membrane. It catalyses the reaction (S)-dihydroorotate + a quinone = orotate + a quinol. It functions in the pathway pyrimidine metabolism; UMP biosynthesis via de novo pathway; orotate from (S)-dihydroorotate (quinone route): step 1/1. Its function is as follows. Catalyzes the conversion of dihydroorotate to orotate with quinone as electron acceptor. This chain is Dihydroorotate dehydrogenase (quinone), found in Haemophilus influenzae (strain 86-028NP).